The following is a 155-amino-acid chain: Small ribosomal subunit protein uS7cz/uS7cy (155 aa).

Belongs to the universal ribosomal protein uS7 family. Part of the 30S ribosomal subunit.

Its subcellular location is the plastid. It localises to the chloroplast. One of the primary rRNA binding proteins, it binds directly to 16S rRNA where it nucleates assembly of the head domain of the 30S subunit. The sequence is that of Small ribosomal subunit protein uS7cz/uS7cy (rps7-A) from Daucus carota (Wild carrot).